A 157-amino-acid polypeptide reads, in one-letter code: Phosphopantetheine adenylyltransferase (157 aa).

Residue threonine 10 coordinates substrate. Residues 10 to 11 and histidine 18 each bind ATP; that span reads TF. Substrate is bound by residues lysine 42, leucine 74, and arginine 88. ATP contacts are provided by residues 89–91, glutamate 99, and 124–130; these read GLR and NAFISSS.

The protein belongs to the bacterial CoaD family. In terms of assembly, homohexamer. Mg(2+) is required as a cofactor.

It localises to the cytoplasm. The enzyme catalyses (R)-4'-phosphopantetheine + ATP + H(+) = 3'-dephospho-CoA + diphosphate. The protein operates within cofactor biosynthesis; coenzyme A biosynthesis; CoA from (R)-pantothenate: step 4/5. With respect to regulation, tightly binds to CoA, which is presumably a feedback inhibitor. Potently inhibited by D-amethopterin, which simultaneously occupies the 4'-phosphopantetheine- and ATP-binding sites; following treatment with D-amethopterin, H.pylori exhibits morphological characteristics associated with cell death, showing that D-amethopterin displays antimicrobial activity. Reversibly transfers an adenylyl group from ATP to 4'-phosphopantetheine, yielding dephospho-CoA (dPCoA) and pyrophosphate. The chain is Phosphopantetheine adenylyltransferase from Helicobacter pylori (strain ATCC 700392 / 26695) (Campylobacter pylori).